The sequence spans 3010 residues: Probable polyketide synthase 2 (3010 aa).

A Ketosynthase family 3 (KS3) domain is found at 9-432 (SRDVAVIGIG…GSNACLLLSE (424 aa)). Active-site for beta-ketoacyl synthase activity residues include cysteine 174, histidine 313, and histidine 353. The interval 629 to 662 (GINPSINVGHSFGEISSACCSGMLDLETACFIVY) is acyl/malonyl transferase. Residue serine 639 is the For acyl/malonyl transferase activity of the active site. The tract at residues 944 to 1063 (ATQLGYRNDV…ARFSVLKHNS (120 aa)) is N-terminal hotdog fold. The 292-residue stretch at 944–1235 (ATQLGYRNDV…YSSISTDIKN (292 aa)) folds into the PKS/mFAS DH domain. The active-site Proton acceptor; for dehydratase activity is histidine 976. The C-terminal hotdog fold stretch occupies residues 1080 to 1235 (NWTTIKRKEF…YSSISTDIKN (156 aa)). Aspartate 1146 serves as the catalytic Proton donor; for dehydratase activity. Residues 2482–2559 (DNELSIRDDI…QLIQAVIQAV (78 aa)) form the Carrier domain. Serine 2519 is modified (O-(pantetheine 4'-phosphoryl)serine).

Requires pantetheine 4'-phosphate as cofactor.

In terms of biological role, probable polyketide synthase. In Dictyostelium discoideum (Social amoeba), this protein is Probable polyketide synthase 2 (pks2).